A 158-amino-acid polypeptide reads, in one-letter code: Ribosome maturation factor RimP (158 aa).

It belongs to the RimP family.

The protein localises to the cytoplasm. In terms of biological role, required for maturation of 30S ribosomal subunits. This is Ribosome maturation factor RimP from Pseudomonas syringae pv. tomato (strain ATCC BAA-871 / DC3000).